Here is a 248-residue protein sequence, read N- to C-terminus: PF03932 family protein CutC (248 aa).

Belongs to the CutC family. Homodimer.

It localises to the cytoplasm. This is PF03932 family protein CutC from Salmonella paratyphi B (strain ATCC BAA-1250 / SPB7).